The primary structure comprises 365 residues: Mannonate dehydratase 1 (365 aa).

The protein belongs to the mannonate dehydratase family. Fe(2+) is required as a cofactor. The cofactor is Mn(2+).

The catalysed reaction is D-mannonate = 2-dehydro-3-deoxy-D-gluconate + H2O. It functions in the pathway carbohydrate metabolism; pentose and glucuronate interconversion. Catalyzes the dehydration of D-mannonate. The sequence is that of Mannonate dehydratase 1 from Bacillus licheniformis (strain ATCC 14580 / DSM 13 / JCM 2505 / CCUG 7422 / NBRC 12200 / NCIMB 9375 / NCTC 10341 / NRRL NRS-1264 / Gibson 46).